Reading from the N-terminus, the 194-residue chain is Small ribosomal subunit protein uS4c (194 aa).

The interval glycine 13–glutamine 36 is disordered. The 62-residue stretch at methionine 82–asparagine 143 folds into the S4 RNA-binding domain.

This sequence belongs to the universal ribosomal protein uS4 family. In terms of assembly, part of the 30S ribosomal subunit. Contacts protein S5. The interaction surface between S4 and S5 is involved in control of translational fidelity.

Its subcellular location is the plastid. It is found in the chloroplast. Its function is as follows. One of the primary rRNA binding proteins, it binds directly to 16S rRNA where it nucleates assembly of the body of the 30S subunit. Functionally, with S5 and S12 plays an important role in translational accuracy. This is Small ribosomal subunit protein uS4c (rps4) from Moraea spathulata (Large yellow moraea).